We begin with the raw amino-acid sequence, 25 residues long: Alanine racemase (25 aa).

It belongs to the alanine racemase family. Homodimer. Requires pyridoxal 5'-phosphate as cofactor.

It carries out the reaction L-alanine = D-alanine. The protein operates within amino-acid biosynthesis; D-alanine biosynthesis; D-alanine from L-alanine: step 1/1. Its function is as follows. Catalyzes the interconversion of L-alanine and D-alanine. The protein is Alanine racemase of Pseudomonas fluorescens.